The following is a 386-amino-acid chain: Leupaxin (386 aa).

Position 1 is an N-acetylmethionine (Met-1). An LD motif 1 motif is present at residues 3–15; sequence ELDALLEELERST. Positions 12–51 are disordered; sequence ERSTLQDSDEYSNSAPLPLDQSSRKESNLDETSKMLSVQD. A compositionally biased stretch (polar residues) spans 16-26; sequence LQDSDEYSNSA. Phosphoserine is present on Ser-19. Position 22 is a phosphotyrosine (Tyr-22). Over residues 33–44 the composition is skewed to basic and acidic residues; the sequence is SSRKESNLDETS. Tyr-62 is modified (phosphotyrosine). 2 consecutive short sequence motifs (LD motif) follow at residues 70-82 and 92-103; these read NVYS…KKSP and QLDELMAHLSEM. Tyr-72 carries the phosphotyrosine; by LYN modification. Residue Ser-81 is modified to Phosphoserine. LIM zinc-binding domains are found at residues 150-209, 210-267, 268-327, and 328-386; these read GHCA…LFSP, RCAY…AMFS, PKCG…RRGT, and LCHG…LFSL.

Belongs to the paxillin family. As to quaternary structure, interacts with unphosphorylated ITGA4. Interacts with AR and SRF. Interacts with PTK2B/PYK2, PTPN22 and PTPN12. Interacts (via LD motif 3) with LYN and the interaction is induced upon B-cell antigen receptor (BCR) activation. Interacts (via LD motif 3) with PTK2/FAK. Post-translationally, phosphorylated on tyrosine residues. Phosphorylation on Tyr-72 is important for its inhibitory function. Bombesin stimulates phosphorylation on Tyr-22, Tyr-62 and Tyr-72.

It localises to the cytoplasm. Its subcellular location is the cell junction. The protein resides in the focal adhesion. It is found in the nucleus. The protein localises to the perinuclear region. It localises to the cell projection. Its subcellular location is the podosome. The protein resides in the cell membrane. Transcriptional coactivator for androgen receptor (AR) and serum response factor (SRF). Contributes to the regulation of cell adhesion, spreading and cell migration and acts as a negative regulator in integrin-mediated cell adhesion events. Suppresses the integrin-induced tyrosine phosphorylation of paxillin (PXN). May play a critical role as an adapter protein in the formation of the adhesion zone in osteoclasts. Negatively regulates B-cell antigen receptor (BCR) signaling. The protein is Leupaxin (LPXN) of Oryctolagus cuniculus (Rabbit).